A 390-amino-acid chain; its full sequence is MGAFLDKPKTEKHNAHGAGNGLRYGLSSMQGWRVEMEDAHTAVVGIPHGLDNWSFFAVYDGHAGSRVANYCSTHLLEHITTNEDFRAADKSGSALEPSVESVKTGIRTGFLKIDEYMRNFSDLRNGMDRSGSTAVGVMVSPTHMYFINCGDSRAVLCRNGQVCFSTQDHKPCNPVEKERIQNAGGSVMIQRVNGSLAVSRALGDYDYKCVDGKGPTEQLVSPEPEVYEIVRAEEDEFVVLACDGIWDVMSNEELCEFVKSRLEVSDDLENVCNWVVDTCLHKGSRDNMSVVLVCFSNAPKVSEEAVKRDSELDKHLESRVEEIMQKSGEEGMPDLAHVMRILSAENIPNLPPGGGLAGKRHVIEAVYSRLNPHKDNDGGAGDLEDSLVAL.

Over residues 1 to 14 (MGAFLDKPKTEKHN) the composition is skewed to basic and acidic residues. Residues 1-20 (MGAFLDKPKTEKHNAHGAGN) are disordered. A lipid anchor (N-myristoyl glycine) is attached at G2. K12 is covalently cross-linked (Glycyl lysine isopeptide (Lys-Gly) (interchain with G-Cter in ISG15)). Positions 23–295 (RYGLSSMQGW…DNMSVVLVCF (273 aa)) constitute a PPM-type phosphatase domain. Residues D60, G61, D243, and D286 each contribute to the Mn(2+) site. The tract at residues 371-390 (NPHKDNDGGAGDLEDSLVAL) is disordered. S386 carries the post-translational modification Phosphoserine.

The protein belongs to the PP2C family. Monomer. Interacts with PAK6. Interacts with the phosphorylated form of IKBKB/IKKB. Mg(2+) is required as a cofactor. It depends on Mn(2+) as a cofactor. In terms of processing, isgylation negatively regulates its activity. Post-translationally, N-myristoylation is essential for the recognition of its substrates for dephosphorylation. In terms of tissue distribution, isoform 1: Expressed ubiquitously. Isoform 2: Expressed exclusively in testis and intestine. Isoform 3: Expressed exclusively in brain and intestine. Isoform 4: Expressed exclusively in testis and intestine.

It is found in the cytoplasm. The protein resides in the cytosol. Its subcellular location is the membrane. It carries out the reaction O-phospho-L-seryl-[protein] + H2O = L-seryl-[protein] + phosphate. The catalysed reaction is O-phospho-L-threonyl-[protein] + H2O = L-threonyl-[protein] + phosphate. Its function is as follows. Enzyme with a broad specificity. Dephosphorylates PRKAA1 and PRKAA2. Inhibits TBK1-mediated antiviral signaling by dephosphorylating it at 'Ser-172'. Plays an important role in the termination of TNF-alpha-mediated NF-kappa-B activation through dephosphorylating and inactivating IKBKB/IKKB. The chain is Protein phosphatase 1B (Ppm1b) from Mus musculus (Mouse).